The chain runs to 391 residues: Zinc finger protein ubi-d4 (391 aa).

An N-acetylalanine modification is found at Ala2. Glycyl lysine isopeptide (Lys-Gly) (interchain with G-Cter in SUMO2) cross-links involve residues Lys10, Lys99, Lys107, and Lys108. 2 disordered regions span residues 79-146 and 165-196; these read WRKK…LGEF and DDLD…ARKK. 2 stretches are compositionally biased toward basic and acidic residues: residues 100–110 and 126–140; these read PDTDQTLKKEG and DPLE…RVDD. Ser142 is modified (phosphoserine). Residues 165–174 are compositionally biased toward acidic residues; it reads DDLDDEDYEE. Tyr172 carries the phosphotyrosine modification. Thr176 carries the post-translational modification Phosphothreonine. Glycyl lysine isopeptide (Lys-Gly) (interchain with G-Cter in SUMO2) cross-links involve residues Lys178 and Lys196. The residue at position 200 (Ser200) is a Phosphoserine. The C2H2-type zinc finger occupies 209–232; sequence YACDICGKRYKNRPGLSYHYAHSH. The interval 233 to 266 is disordered; it reads LAEEEGEDKEDSQPPTPVSQRSEEQKSKKGPDGL. Ser244 carries the phosphoserine modification. Positions 253-263 are enriched in basic and acidic residues; that stretch reads RSEEQKSKKGP. PHD-type zinc fingers lie at residues 270-330 and 327-377; these read NNYC…CKCC and CKCC…CLDL. Residue Ser280 is modified to Phosphoserine. Lys281 participates in a covalent cross-link: Glycyl lysine isopeptide (Lys-Gly) (interchain with G-Cter in SUMO2).

The protein belongs to the requiem/DPF family. As to quaternary structure, interacts with the nucleosomes, in particular nucleosomes bearing histone H3 crotonylated at 'Lys-14' (H3K14cr) for which DPF2 has high affinity. Also interacts (via PHD-type zinc finger domains) with histone H3 butyrylated at 'Lys-14' (H3K14bu), histone H3 propionylated at 'Lys-14' (H3K14pr), and histone H3 acetylated at 'Lys-14' (H3K14ac). Interacts with histone H3 acetylated at 'Lys-9' (H3K9ac), histone H3 di-methylated at 'Lys-9' (H3K9me2), and histone H3 tri-methylated at 'Lys-9' (H3K9me3). Interacts with histone H4 acetylated at 'Lys-12' (H4K12ac). Interacts with histone H4 acetylated at 'Lys-16' (H4K16ac). Interacts with SWI/SNF complex components. Interacts with SMARCA2, SMARCA4, SMARCB1 and SMARCD1. Interacts with SMARCC1, SMARCC2 and ACTL6A. Interacts with RUNX1. As to expression, ubiquitous.

It localises to the nucleus. Its subcellular location is the cytoplasm. Plays an active role in transcriptional regulation by binding modified histones H3 and H4. Is a negative regulator of myeloid differentiation of hematopoietic progenitor cells. Might also have a role in the development and maturation of lymphoid cells. Involved in the regulation of non-canonical NF-kappa-B pathway. The chain is Zinc finger protein ubi-d4 (DPF2) from Homo sapiens (Human).